The primary structure comprises 846 residues: Rho GTPase-activating protein 17 (846 aa).

One can recognise a BAR domain in the interval Gln14–Glu246. Positions Thr252–Phe442 constitute a Rho-GAP domain. A compositionally biased stretch (polar residues) spans Thr459–Gly475. Residues Thr459–Pro482 form a disordered region. 2 positions are modified to phosphoserine: Ser484 and Ser575. The disordered stretch occupies residues Ile519 to Ser807. A compositionally biased stretch (polar residues) spans Arg592–His619. Positions Ala637–His650 are enriched in pro residues. Residues Gly653 to Gln690 are compositionally biased toward low complexity. Phosphoserine is present on residues Ser698 and Ser700. Composition is skewed to pro residues over residues Ile704–Gln717 and Glu726–Pro741. 3 positions are modified to phosphothreonine: Thr730, Thr734, and Thr736. Residues Thr730–Leu743 carry the SH3-binding motif. Ser739 bears the Phosphoserine mark. Thr740 is modified (phosphothreonine). Over residues Gln746–His757 the composition is skewed to polar residues. Residues Arg772 to Pro782 are compositionally biased toward pro residues. Polar residues predominate over residues Leu791–Ser807.

In terms of assembly, component of a complex whose core is composed of ARHGAP17, AMOT, PALS1, PATJ and PARD3/PAR3. Interacts with NHERF1, FNBP1, TRIP10, CAPZA (CAPZA1, CAPZA2 or CAPZA3), CAPZB, CD2AP and SH3KBP1/CIN85.

The protein localises to the membrane. It is found in the cytoplasm. The protein resides in the cell junction. Its subcellular location is the tight junction. Rho GTPase-activating protein involved in the maintenance of tight junction by regulating the activity of CDC42, thereby playing a central role in apical polarity of epithelial cells. Specifically acts as a GTPase activator for the CDC42 GTPase by converting it to an inactive GDP-bound state. The complex formed with AMOT acts by regulating the uptake of polarity proteins at tight junctions, possibly by deciding whether tight junction transmembrane proteins are recycled back to the plasma membrane or sent elsewhere. Participates in the Ca(2+)-dependent regulation of exocytosis, possibly by catalyzing GTPase activity of Rho family proteins and by inducing the reorganization of the cortical actin filaments. Acts as a GTPase activator in vitro for RAC1. The sequence is that of Rho GTPase-activating protein 17 (Arhgap17) from Mus musculus (Mouse).